A 364-amino-acid polypeptide reads, in one-letter code: Lysophosphatidic acid receptor 1 (364 aa).

At 1–50 the chain is on the extracellular side; it reads MAAISTSIPVISQPQFTAMNEPQCFYNESIAFFYNRSGKHLATEWNTVSK. 2 cysteine pairs are disulfide-bonded: Cys24–Cys190 and Cys188–Cys195. N-linked (GlcNAc...) asparagine glycans are attached at residues Asn27 and Asn35. A 1-acyl-sn-glycero-3-phosphate is bound at residue Lys39. A helical transmembrane segment spans residues 51–75; it reads LVMGLGITVCIFIMLANLLVMVAIY. Over 76–83 the chain is Cytoplasmic; the sequence is VNRRFHFP. The helical transmembrane segment at 84-107 threads the bilayer; it reads IYYLMANLAAADFFAGLAYFYLMF. At 108 to 121 the chain is on the extracellular side; the sequence is NTGPNTRRLTVSTW. Residues 122 to 144 traverse the membrane as a helical segment; the sequence is LLRQGLIDTSLTASVANLLAIAI. 124–129 is a binding site for a 1-acyl-sn-glycero-3-phosphate; that stretch reads RQGLID. The Cytoplasmic segment spans residues 145 to 163; it reads ERHITVFRMQLHTRMSNRR. Residues 164 to 184 traverse the membrane as a helical segment; sequence VVVVIVVIWTMAIVMGAIPSV. The Extracellular portion of the chain corresponds to 185-204; sequence GWNCICDIENCSNMAPLYSD. The helical transmembrane segment at 205–225 threads the bilayer; it reads SYLVFWAIFNLVTFVVMVVLY. Residue Trp210 participates in a 1-acyl-sn-glycero-3-phosphate binding. Residues 226-255 are Cytoplasmic-facing; the sequence is AHIFGYVRQRTMRMSRHSSGPRRNRDTMMS. Residues 256-280 form a helical membrane-spanning segment; that stretch reads LLKTVVIVLGAFIICWTPGLVLLLL. Over 281-294 the chain is Extracellular; the sequence is DVCCPQCDVLAYEK. Cys284 and Cys287 are disulfide-bonded. The chain crosses the membrane as a helical span at residues 295–315; it reads FFLLLAEFNSAMNPIIYSYRD. Over 316 to 364 the chain is Cytoplasmic; sequence KEMSATFRQILCCQRSENPTGPTEGSDRSASSLNHTILAGVHSNDHSVV. Residue Ser341 is modified to Phosphoserine. Thr351 carries the post-translational modification Phosphothreonine.

Belongs to the G-protein coupled receptor 1 family. As to quaternary structure, interacts with RALA and GRK2. Interacts with GNAQ and GNA13. Interacts with CD14; the interaction is enhanced by exposure to bacterial lipopolysaccharide (LPS). N-glycosylated. As to expression, expressed in many adult organs, including brain, heart, colon, small intestine, placenta, prostate, ovary, pancreas, testes, spleen, skeletal muscle, and kidney. Little or no expression in liver, lung, thymus, or peripheral blood leukocytes. Detected in lung fibroblasts from bronchoalveolar fluid from patients with idiopathic pulmonary fibrosis. Detected in bone marrow-derived mesenchymal stem cells.

The protein resides in the cell surface. It is found in the cell membrane. The protein localises to the endosome. Receptor for lysophosphatidic acid (LPA). Plays a role in the reorganization of the actin cytoskeleton, cell migration, differentiation and proliferation, and thereby contributes to the responses to tissue damage and infectious agents. Activates downstream signaling cascades via the G(i)/G(o), G(12)/G(13), and G(q) families of heteromeric G proteins. Signaling inhibits adenylyl cyclase activity and decreases cellular cAMP levels. Signaling triggers an increase of cytoplasmic Ca(2+) levels. Activates RALA; this leads to the activation of phospholipase C (PLC) and the formation of inositol 1,4,5-trisphosphate. Signaling mediates activation of down-stream MAP kinases. Contributes to the regulation of cell shape. Promotes Rho-dependent reorganization of the actin cytoskeleton in neuronal cells and neurite retraction. Promotes the activation of Rho and the formation of actin stress fibers. Promotes formation of lamellipodia at the leading edge of migrating cells via activation of RAC1. Through its function as LPA receptor, plays a role in chemotaxis and cell migration, including responses to injury and wounding. Plays a role in triggering inflammation in response to bacterial lipopolysaccharide (LPS) via its interaction with CD14. Promotes cell proliferation in response to LPA. Inhibits the intracellular ciliogenesis pathway in response to LPA and through AKT1 activation. Required for normal skeleton development. May play a role in osteoblast differentiation. Required for normal brain development. Required for normal proliferation, survival and maturation of newly formed neurons in the adult dentate gyrus. Plays a role in pain perception and in the initiation of neuropathic pain. The sequence is that of Lysophosphatidic acid receptor 1 (LPAR1) from Homo sapiens (Human).